Consider the following 238-residue polypeptide: Probable transcriptional regulatory protein YcdB (238 aa).

It belongs to the TACO1 family. YeeN subfamily.

Its subcellular location is the cytoplasm. This is Probable transcriptional regulatory protein YcdB (ycdB) from Lactococcus lactis subsp. lactis (strain IL1403) (Streptococcus lactis).